The primary structure comprises 168 residues: Pathogenesis-related protein 1B (168 aa).

A signal peptide spans 1 to 30 (MGFFLFSQMPSFFLVSTLLLFLIISHSSHA). An SCP domain is found at 38–156 (LDAHNTARAD…NGGYVVSCNY (119 aa)).

This sequence belongs to the CRISP family. Post-translationally, three disulfide bonds are present.

The protein localises to the vacuole. Its function is as follows. Probably involved in the defense reaction of plants against pathogens. The protein is Pathogenesis-related protein 1B of Nicotiana tabacum (Common tobacco).